The chain runs to 467 residues: Phosphomethylpyrimidine synthase (467 aa).

Residues N80, M109, Y139, H175, 195 to 197, 236 to 239, and E275 each bind substrate; these read SRG and DSLR. Zn(2+) is bound at residue H279. Y302 contributes to the substrate binding site. H343 is a Zn(2+) binding site. C423, C426, and C431 together coordinate [4Fe-4S] cluster.

It belongs to the ThiC family. [4Fe-4S] cluster serves as cofactor.

It carries out the reaction 5-amino-1-(5-phospho-beta-D-ribosyl)imidazole + S-adenosyl-L-methionine = 4-amino-2-methyl-5-(phosphooxymethyl)pyrimidine + CO + 5'-deoxyadenosine + formate + L-methionine + 3 H(+). The protein operates within cofactor biosynthesis; thiamine diphosphate biosynthesis. Functionally, catalyzes the synthesis of the hydroxymethylpyrimidine phosphate (HMP-P) moiety of thiamine from aminoimidazole ribotide (AIR) in a radical S-adenosyl-L-methionine (SAM)-dependent reaction. The chain is Phosphomethylpyrimidine synthase from Synechococcus sp. (strain WH7803).